Reading from the N-terminus, the 391-residue chain is Phosphoglycerate kinase (391 aa).

Substrate-binding positions include 21–23 (DFN), Arg36, 59–62 (HLGR), Arg113, and Arg146. Residues Lys197, Glu319, and 345–348 (GGDT) each bind ATP.

It belongs to the phosphoglycerate kinase family. Monomer.

The protein localises to the cytoplasm. It carries out the reaction (2R)-3-phosphoglycerate + ATP = (2R)-3-phospho-glyceroyl phosphate + ADP. Its pathway is carbohydrate degradation; glycolysis; pyruvate from D-glyceraldehyde 3-phosphate: step 2/5. In Methylococcus capsulatus (strain ATCC 33009 / NCIMB 11132 / Bath), this protein is Phosphoglycerate kinase.